A 42-amino-acid polypeptide reads, in one-letter code: Photosystem I reaction center subunit IX (42 aa).

A helical transmembrane segment spans residues 7–27 (FLSLGPVLLVLWLSVQATLLI).

It belongs to the PsaJ family.

It is found in the cellular thylakoid membrane. In terms of biological role, may help in the organization of the PsaE and PsaF subunits. The protein is Photosystem I reaction center subunit IX of Gloeothece citriformis (strain PCC 7424) (Cyanothece sp. (strain PCC 7424)).